The primary structure comprises 357 residues: Ribosomal RNA large subunit methyltransferase M (357 aa).

S-adenosyl-L-methionine contacts are provided by residues serine 190, 223 to 226 (APGG), aspartate 242, aspartate 262, and aspartate 278. Lysine 307 functions as the Proton acceptor in the catalytic mechanism.

The protein belongs to the class I-like SAM-binding methyltransferase superfamily. RNA methyltransferase RlmE family. RlmM subfamily. In terms of assembly, monomer.

The protein resides in the cytoplasm. It catalyses the reaction cytidine(2498) in 23S rRNA + S-adenosyl-L-methionine = 2'-O-methylcytidine(2498) in 23S rRNA + S-adenosyl-L-homocysteine + H(+). Functionally, catalyzes the 2'-O-methylation at nucleotide C2498 in 23S rRNA. The polypeptide is Ribosomal RNA large subunit methyltransferase M (Chromohalobacter salexigens (strain ATCC BAA-138 / DSM 3043 / CIP 106854 / NCIMB 13768 / 1H11)).